The sequence spans 120 residues: NAD(P)H-quinone oxidoreductase subunit 3, chloroplastic (120 aa).

Helical transmembrane passes span 9–29, 64–84, and 88–108; these read IFWA…LISG, MFAL…PWAM, and VLGV…IVGL.

It belongs to the complex I subunit 3 family. In terms of assembly, NDH is composed of at least 16 different subunits, 5 of which are encoded in the nucleus.

It localises to the plastid. The protein resides in the chloroplast thylakoid membrane. The enzyme catalyses a plastoquinone + NADH + (n+1) H(+)(in) = a plastoquinol + NAD(+) + n H(+)(out). It carries out the reaction a plastoquinone + NADPH + (n+1) H(+)(in) = a plastoquinol + NADP(+) + n H(+)(out). Functionally, NDH shuttles electrons from NAD(P)H:plastoquinone, via FMN and iron-sulfur (Fe-S) centers, to quinones in the photosynthetic chain and possibly in a chloroplast respiratory chain. The immediate electron acceptor for the enzyme in this species is believed to be plastoquinone. Couples the redox reaction to proton translocation, and thus conserves the redox energy in a proton gradient. This chain is NAD(P)H-quinone oxidoreductase subunit 3, chloroplastic, found in Ranunculus macranthus (Large buttercup).